A 444-amino-acid chain; its full sequence is Elongation factor 1-alpha (444 aa).

The tr-type G domain maps to 15–236; the sequence is KPHINLAVVG…VLDTFQPPPR (222 aa). The tract at residues 24-31 is G1; that stretch reads GHVDNGKS. Residue 24–31 coordinates GTP; the sequence is GHVDNGKS. S31 contacts Mg(2+). The interval 80–84 is G2; sequence GVTIE. The G3 stretch occupies residues 101–104; the sequence is DLPG. Residues 101 to 105 and 163 to 166 each bind GTP; these read DLPGH and NKMD. The segment at 163 to 166 is G4; sequence NKMD. The interval 202 to 204 is G5; it reads SAI.

Belongs to the TRAFAC class translation factor GTPase superfamily. Classic translation factor GTPase family. EF-Tu/EF-1A subfamily.

Its subcellular location is the cytoplasm. The enzyme catalyses GTP + H2O = GDP + phosphate + H(+). In terms of biological role, GTP hydrolase that promotes the GTP-dependent binding of aminoacyl-tRNA to the A-site of ribosomes during protein biosynthesis. This chain is Elongation factor 1-alpha, found in Pyrobaculum calidifontis (strain DSM 21063 / JCM 11548 / VA1).